Consider the following 541-residue polypeptide: Atlastin (541 aa).

Over 1-424 (MGGSAVQVIN…NIFKAARTPA (424 aa)) the chain is Cytoplasmic. In terms of domain architecture, GB1/RHD3-type G spans 35–284 (DRFVCVVSVA…LVPMLLAPDN (250 aa)). The GDP site is built by arginine 48, lysine 49, glycine 50, lysine 51, and serine 52. 6 residues coordinate GTP: arginine 48, lysine 49, glycine 50, lysine 51, serine 52, and phenylalanine 53. Serine 52 is a binding site for Mg(2+). Aspartate 121 is a Mg(2+) binding site. Positions 192, 193, and 251 each coordinate GDP. Arginine 192, aspartate 193, and valine 251 together coordinate GTP. A 3HB (three-helix bundle) domain region spans residues 322-413 (MLVATAEANH…FTNYQAHNES (92 aa)). Residues 414–422 (KNIFKAART) form a linker region. Residues 425-445 (VYFACAVIMYILSGIFGLVGL) traverse the membrane as a helical segment. Over 446-448 (YTF) the chain is Lumenal. A helical membrane pass occupies residues 449 to 469 (ANFCNLVMGVALLTLALWAYI). The Cytoplasmic portion of the chain corresponds to 470–541 (RYSGELSDFG…NASNGKVKRS (72 aa)). Threonine 514 carries the phosphothreonine modification.

Belongs to the TRAFAC class dynamin-like GTPase superfamily. GB1/RHD3 GTPase family. GB1 subfamily. Monomeric and homodimeric. The homodimer, transiently formed by two molecules on opposing membranes, is the active form mediating ER membrane fusion. Interacts with spas; interaction may regulate microtubule dynamics. In terms of tissue distribution, ubiquitously expressed.

The protein resides in the endoplasmic reticulum membrane. The protein localises to the golgi apparatus membrane. The enzyme catalyses GTP + H2O = GDP + phosphate + H(+). Functionally, membrane-anchored GTPase that mediates the GTP-dependent fusion of endoplasmic reticulum (ER) membranes, maintaining the continuous ER network. It facilitates the formation of three-way junctions where ER tubules intersect. Two atlastin-1 on neighboring ER tubules bind GTP and form loose homodimers through the GB1/RHD3-type G domains and 3HB regions. Upon GTP hydrolysis, the 3HB regions tighten, pulling the membranes together to drive their fusion. After fusion, the homodimer disassembles upon release of inorganic phosphate (Pi). Subsequently, GDP dissociates, resetting the monomers to a conformation ready for a new fusion cycle. May also regulate more or less directly Golgi biogenesis. May also regulate microtubule polymerization and Golgi biogenesis. Required for dopaminergic neurons survival and the growth of muscles and synapses at neuromuscular junctions. This Drosophila melanogaster (Fruit fly) protein is Atlastin (atl).